A 400-amino-acid chain; its full sequence is Na(+)/H(+) antiporter NhaA (400 aa).

The next 11 membrane-spanning stretches (helical) occupy residues Phe9–Val29, Leu60–Leu80, Val96–Phe116, Trp127–Ala147, Ile155–Phe175, Leu180–Leu200, Leu210–Ala230, Tyr263–Leu283, Val294–Ile314, Trp327–Ile347, and Val366–Val386.

It belongs to the NhaA Na(+)/H(+) (TC 2.A.33) antiporter family.

Its subcellular location is the cell inner membrane. It catalyses the reaction Na(+)(in) + 2 H(+)(out) = Na(+)(out) + 2 H(+)(in). In terms of biological role, na(+)/H(+) antiporter that extrudes sodium in exchange for external protons. The sequence is that of Na(+)/H(+) antiporter NhaA from Campylobacter curvus (strain 525.92).